We begin with the raw amino-acid sequence, 585 residues long: MTYHFEIDTQWCLEQLLKDGRISERDKLLIQTTHRNKEQLKWHPLQWIAHFDLKDQAHTSKPFDILRLSQWLAEKVGLPLYVIDPLKADVNMLTSVMSQEFALRNKILAVDVNPERILIGTDQPFVRDWVSNLELSLAPKKIELVLLSPDQLQRYLPEYYQVSRAVHSSKNATAYERDNKGVEALLQLGDNQNPDANDQHIVKLVDWILQFAFEQGASDIHLEPRKEKGKVRFRIDGVLHTIYHMPANTLSAVIARIKILGRLNVAEKRKPQDGRLKTRTPKGQETELRLSTLPTAFGEKLVMRIFDPDVLVRSFEQLGFDEILLKQWQALSRNSHGIILVTGPTGSGKTTTLYSSLKQLATDQVNVCTIEDPIEMLESSFNQMQVNAAIDLGFADGVRALMRQDPDIIMVGEIRDQDTANMAIQAALTGHLVLSTLHTNDAPSSLTRLHDLGVQPFLTAATLLGVLAQRLVRQLCPHCKVLSDIDKQQWQHLTQDYEIAMPEQIYGPVGCDHCRQTGYKGRIGIYEFMSLDLNLKQLVSSEANLNQLKSEAKKQGIQPLRIAGARKILEGVTSLEEVLRVVPLT.

G346 to T351 lines the ATP pocket. Residues C476, C479, C511, and C514 each coordinate Zn(2+).

It belongs to the GSP E family.

The protein localises to the cytoplasm. In terms of biological role, ATPase component of the type IV pilus (T4P). Acts as a molecular motor to provide the energy that is required for biogenesis of the pilus and the extrusion of substrates generated in the cytoplasm. TfpB is required for optimal T4P extension and, consequently, efficient natural transformation. May play a role in initiating T4P extension. In Acinetobacter baylyi (strain ATCC 33305 / BD413 / ADP1), this protein is Type IV pilus assembly ATPase TfpB.